Reading from the N-terminus, the 318-residue chain is Taste receptor type 2 member 60 (318 aa).

At 1–7 (MNGDHMV) the chain is on the extracellular side. Residues 8–28 (LGSSVTDQKAIILVIILLLLC) form a helical membrane-spanning segment. Over 29-40 (LVAIAGNGFITA) the chain is Cytoplasmic. Residues 41–61 (ALGVEWVLRGTLLPCDKLLVS) form a helical membrane-spanning segment. Over 62-88 (LRASRFCLQWVVMGKTIYVLLYPTAFP) the chain is Extracellular. A helical membrane pass occupies residues 89–109 (YNPVLQFLAFQWDFLNAATLW). The Cytoplasmic portion of the chain corresponds to 110–128 (FSSWLSVFYCVKIATFTHP). The helical transmembrane segment at 129–149 (VFLWLKHKLSEWVPWMFFSSV) threads the bilayer. The Extracellular segment spans residues 150 to 183 (GLSSFTTILFFIGNHSIYQNYLRNHLQPWNVTGN). 2 N-linked (GlcNAc...) asparagine glycosylation sites follow: asparagine 163 and asparagine 179. A helical transmembrane segment spans residues 184–204 (SIWSYCEKFYLFPVKMITWTM). Over 205–234 (PTAVFFICMILLITSLGRHMEKALLTTSGF) the chain is Cytoplasmic. Residues 235–255 (REPSVQAHVKALLALLSLAML) traverse the membrane as a helical segment. The Extracellular portion of the chain corresponds to 256 to 264 (FISYFLSLV). A helical transmembrane segment spans residues 265–285 (LSAAGIFPPLDFKFWVGESVI). Over 286–318 (YLCAGVHPIILLFSNRRLRAVLERCRSSRCRTP) the chain is Cytoplasmic.

Belongs to the G-protein coupled receptor T2R family.

Its subcellular location is the membrane. Receptor that may play a role in the perception of bitterness and is gustducin-linked. May play a role in sensing the chemical composition of the gastrointestinal content. The activity of this receptor may stimulate alpha gustducin, mediate PLC-beta-2 activation and lead to the gating of TRPM5. In Macaca mulatta (Rhesus macaque), this protein is Taste receptor type 2 member 60 (TAS2R60).